The primary structure comprises 111 residues: Cell division protein FtsB (111 aa).

The Cytoplasmic segment spans residues M1–K3. The helical transmembrane segment at L4 to L21 threads the bilayer. Residues G22–R111 lie on the Periplasmic side of the membrane. Residues K33–G63 are a coiled coil. A disordered region spans residues V88–R111. The span at N97–R111 shows a compositional bias: low complexity.

It belongs to the FtsB family. In terms of assembly, part of a complex composed of FtsB, FtsL and FtsQ.

It is found in the cell inner membrane. Essential cell division protein. May link together the upstream cell division proteins, which are predominantly cytoplasmic, with the downstream cell division proteins, which are predominantly periplasmic. The protein is Cell division protein FtsB of Pectobacterium atrosepticum (strain SCRI 1043 / ATCC BAA-672) (Erwinia carotovora subsp. atroseptica).